Reading from the N-terminus, the 1063-residue chain is MLLCIVLFLIFHILINQAGIVHVLYNASFVASSSRFILFCEELFKATPQYWQWGNSIVQNGDASIASTLYLTMRTFIKHWKYTLLIMINQSISYSCYSTNEASHLLFTNLPKVAPYTLGPLNFECCLLSSHHIRHIVLMFYGANIDHGLTKYELYTVCRPSSDEKLCNKILNSPRLHTHNRYLYLTEVRIVGAFYLIKQVGARMVGLLVHLAFMVLQNLPKLIWPLDLVHVRQKGTCTAHIAYHPLAQKHFPPYFTHFYLNVTIYAVVKNILDNISSSFTLQSNRVRPRPDVAGFDFFHRFDAFEQSLTYGGDTGITSSNEKVALCFEATYTDIFFTVEIIDSTSVDSGAIMLPILVDAYTAVARNFCSVSMVISPLVTLVVYDIYTCSFIGLCTQRRTINCTRILDAISSVGNSHTFLPRYKSPRELTTRQPSGSSVILLIFLLLGFEFFLFSGLVVVEPVNDVGDLVVNDLLVAFIDLALELFVVEGVAEVVGVVFKTVLGFNADVVGFIFRLVLFSFLHHAFNIILGEATLVVGNGNLVFFTSRLFDGRHVQDTVGINVEGDINLWNTTRHWRNTIEGELPEQVVVTGHRTLTFKHLNQHTRLVVSVGGESLRLLGWHSSVTLDEGSHDTTSSFQTKRERSDIKKQQVLELFRRVVTAQNGSLDCGTESNSFIRVDRLAWFLAVEEVRKQLLDLWDTGGTTDKDDFMDLALGELRVTEDLFNRFHSLAEVVTAHVFETGTGDGGVEINTIEERVDFNVSLGRRRKSTLGTFTSGTKTAKGTLVLGHILAVLALEFSGKVVDEAVIEIFTTQVGITSSSLDFEDTFFNGQKRHIEGTTTKIENENIAFTTLLVKTVGNGGTSRFVNDTKDVKTSNGTSILGSLTLRVVEISWDGNDSVVNSSTNEGFSNFLHLDQNHRGNFFRLESLSFTLEFDGDLWLVTSTRGNLEWPVLNIGLSSWVVEFTTDQTLSIEHSVGRVHGNLVLSGITNKTFAVSESNVRWGGTVTLIVGNNFNTIVLPDTDTRISRTEIDTDGSSLDTRHACSKFKNEVDSPPHLTSAFI.

The protein belongs to the Glu/Leu/Phe/Val dehydrogenases family. Highly divergent. Homotetramer.

The catalysed reaction is L-glutamate + NAD(+) + H2O = 2-oxoglutarate + NH4(+) + NADH + H(+). Its activity is regulated as follows. Allosterically activated by NADP(+). The protein is NAD-specific glutamate dehydrogenase of Achlya klebsiana.